Consider the following 660-residue polypeptide: Probable alpha-galactosidase D (660 aa).

The first 20 residues, 1-20, serve as a signal peptide directing secretion; that stretch reads MLLHFILYAALSSVVTSVSL. N47, N91, and N129 each carry an N-linked (GlcNAc...) asparagine glycan. An intrachain disulfide couples C124 to C157. D155 (nucleophile) is an active-site residue. Residues N182 and N191 are each glycosylated (N-linked (GlcNAc...) asparagine). 200–204 serves as a coordination point for substrate; that stretch reads EWGIS. The active-site Proton donor is D222. N351, N403, N460, N492, N506, N514, and N584 each carry an N-linked (GlcNAc...) asparagine glycan.

Belongs to the glycosyl hydrolase 27 family.

It is found in the secreted. The enzyme catalyses Hydrolysis of terminal, non-reducing alpha-D-galactose residues in alpha-D-galactosides, including galactose oligosaccharides, galactomannans and galactolipids.. Hydrolyzes a variety of simple alpha-D-galactoside as well as more complex molecules such as oligosaccharides and polysaccharides. This chain is Probable alpha-galactosidase D (aglD), found in Aspergillus niger (strain ATCC MYA-4892 / CBS 513.88 / FGSC A1513).